The sequence spans 277 residues: Kallikrein-13 (277 aa).

Residues 1-16 (MWPLALVIASLTLALS) form the signal peptide. An N-linked (GlcNAc...) asparagine glycan is attached at N30. The region spanning 36–263 (LPGGYTCFPH…YVLWIRETIR (228 aa)) is the Peptidase S1 domain. 5 disulfides stabilise this stretch: C42-C178, C61-C77, C157-C224, C189-C203, and C214-C239. Active-site charge relay system residues include H76 and D124. Catalysis depends on S218, which acts as the Charge relay system. The N-linked (GlcNAc...) asparagine glycan is linked to N225.

The protein belongs to the peptidase S1 family. Kallikrein subfamily. Expressed in prostate, breast, testis and salivary gland.

It localises to the secreted. This is Kallikrein-13 (KLK13) from Homo sapiens (Human).